Reading from the N-terminus, the 316-residue chain is Olfactory receptor 1N2 (316 aa).

At 1-28 the chain is on the extracellular side; it reads MGKPGRVNQTTVSDFLLLGLSEWPEEQP. Asparagine 8 is a glycosylation site (N-linked (GlcNAc...) asparagine). The helical transmembrane segment at 29 to 49 threads the bilayer; that stretch reads LLFGIFLGMYLVTMVGNLLII. At 50-60 the chain is on the cytoplasmic side; that stretch reads LAISSDPHLHT. The helical transmembrane segment at 61–81 threads the bilayer; the sequence is PMYFFLANLSLTDACFTSASI. Residues 82–100 are Extracellular-facing; it reads PKMLANIHTQSQIISYSGC. Cysteines 100 and 182 form a disulfide. A helical membrane pass occupies residues 101–121; the sequence is LAQLYFLLMFGGLDNCLLAVM. Residues 122–145 lie on the Cytoplasmic side of the membrane; sequence AYDRYVAICQPLHYSTSMSPQLCA. The helical transmembrane segment at 146–166 threads the bilayer; the sequence is LMLGVCWVLTNCPALMHTLLL. The Extracellular segment spans residues 167–199; it reads TRVAFCAQKAIPHFYCDPSALLKLACSDTHVNE. A helical membrane pass occupies residues 200 to 220; it reads LMIITMGLLFLTVPLLLIVFS. Over 221–243 the chain is Cytoplasmic; sequence YVRIFWAVFVISSPGGRWKAFST. Residues 244-264 form a helical membrane-spanning segment; it reads CGSHLTVVLLFYGSLMGVYLL. The Extracellular portion of the chain corresponds to 265 to 274; sequence PPSTYSTERE. The helical transmembrane segment at 275–295 threads the bilayer; sequence SRAAVLYMVIIPTLNPFIYSL. Topologically, residues 296-316 are cytoplasmic; that stretch reads RNRDMKEALGKLFVSGKTFFL.

This sequence belongs to the G-protein coupled receptor 1 family.

It localises to the membrane. In terms of biological role, odorant receptor. The chain is Olfactory receptor 1N2 (OR1N2) from Homo sapiens (Human).